The following is a 539-amino-acid chain: Sorting nexin-27 (539 aa).

A disordered region spans residues 1–40 (MADEDGEGIHPSAPHRNGGGGGGSGLHCAGNGGGGGGGPR). The span at 17–39 (NGGGGGGSGLHCAGNGGGGGGGP) shows a compositional bias: gly residues. Positions 41–134 (VVRIVKSESG…ELILTVLSVP (94 aa)) constitute a PDZ domain. 2 positions are modified to phosphoserine: Ser49 and Ser60. The PX domain maps to 159–267 (QAVPISVPTY…EFLSESDENY (109 aa)). Residues 271–360 (SDVELRVALP…TCLTIRKWLF (90 aa)) form the Ras-associating domain. The FERM-like region F1 stretch occupies residues 271 to 360 (SDVELRVALP…TCLTIRKWLF (90 aa)). The FERM-like region F2 stretch occupies residues 371 to 419 (NDLAVTYFFHQAVDDVKKGYIKAEEKSYQLQKLHEQRKMVMYLNMLRTC). An FERM-like region F3 region spans residues 423–523 (NEIIFPHCAC…RVFCELKWRK (101 aa)).

In terms of assembly, core component of the SNX27-retromer, a multiprotein complex composed of SNX27, the WASH complex and the retromer complex. Interacts (via the FERM-like regions) with the WASH complex. Interacts with SNX1. Interacts with CYTIP. Interacts with DGKZ. Interacts with MCC. Interacts (via PDZ domain) with a number of target transmembrane proteins (via PDZ-binding motif): ABCC4, ADRB2, ARHGEF7, GRIA1, GRIA2, GRIN1, GRIN2A GRIN2C, KCNJ6, KCNJ9 and SLC2A1/GLUT1. Interacts (via PDZ domains) with SLC9A3; directs SLC9A3 membrane insertion from early endosomes to the plasma membrane. As to expression, expressed in cells of hematopoietic origin.

The protein resides in the early endosome membrane. It is found in the cytoplasm. The protein localises to the cytosol. Its function is as follows. Involved in the retrograde transport from endosome to plasma membrane, a trafficking pathway that promotes the recycling of internalized transmembrane proteins. Following internalization, endocytosed transmembrane proteins are delivered to early endosomes and recycled to the plasma membrane instead of being degraded in lysosomes. SNX27 specifically binds and directs sorting of a subset of transmembrane proteins containing a PDZ-binding motif at the C-terminus: following interaction with target transmembrane proteins, associates with the retromer complex, preventing entry into the lysosomal pathway, and promotes retromer-tubule based plasma membrane recycling. SNX27 also binds with the WASH complex. Interacts with membranes containing phosphatidylinositol-3-phosphate (PtdIns(3P)). May participate in establishment of natural killer cell polarity. Recruits CYTIP to early endosomes. The chain is Sorting nexin-27 (Snx27) from Mus musculus (Mouse).